A 386-amino-acid polypeptide reads, in one-letter code: Succinate--CoA ligase [ADP-forming] subunit beta (386 aa).

The ATP-grasp domain occupies 9–244 (KEVLRKYGVA…LDEEDPKEIE (236 aa)). Residues K46, 53–55 (GRG), E99, C102, and E107 each bind ATP. Residues N199 and D213 each coordinate Mg(2+). Substrate-binding positions include N264 and 321–323 (GIM).

The protein belongs to the succinate/malate CoA ligase beta subunit family. As to quaternary structure, heterotetramer of two alpha and two beta subunits. Requires Mg(2+) as cofactor.

The enzyme catalyses succinate + ATP + CoA = succinyl-CoA + ADP + phosphate. It carries out the reaction GTP + succinate + CoA = succinyl-CoA + GDP + phosphate. It functions in the pathway carbohydrate metabolism; tricarboxylic acid cycle; succinate from succinyl-CoA (ligase route): step 1/1. Its function is as follows. Succinyl-CoA synthetase functions in the citric acid cycle (TCA), coupling the hydrolysis of succinyl-CoA to the synthesis of either ATP or GTP and thus represents the only step of substrate-level phosphorylation in the TCA. The beta subunit provides nucleotide specificity of the enzyme and binds the substrate succinate, while the binding sites for coenzyme A and phosphate are found in the alpha subunit. The protein is Succinate--CoA ligase [ADP-forming] subunit beta of Bacillus licheniformis (strain ATCC 14580 / DSM 13 / JCM 2505 / CCUG 7422 / NBRC 12200 / NCIMB 9375 / NCTC 10341 / NRRL NRS-1264 / Gibson 46).